The primary structure comprises 25 residues: SMLSVLKNLGKVGLGFVACKINKQC.

C19 and C25 are oxidised to a cystine.

It belongs to the frog skin active peptide (FSAP) family. Ranatuerin subfamily. As to expression, expressed by the skin glands.

Its subcellular location is the secreted. In terms of biological role, antibacterial activity against Gram-positive bacterium S.aureus (MIC=50 uM) and Gram-negative bacterium E.coli (MIC=2 uM). Has activity against C.albicans (MIC=70 uM). Shows no detectable hemolytic activity towards human erythrocytes. In Aquarana catesbeiana (American bullfrog), this protein is Ranatuerin-1.